A 258-amino-acid chain; its full sequence is MSSLLSKTRRLNKILQKTGTEPVAFQDICTLLSEVLECNAYIVSKRGKVLGYTFSPGFECEAMKKKVIEDKKFPEDYNLTLLESNETLANLYNQGRCVFAEIGDCKTKDKISTIIPIIGSRERLGTLILARFGKEFTDDDLVLVEYSATIVGMEMLRALQEDLADQTRKKAVVQLAIGTLSYSELEAVEHIFEELNGNEGLLVASKIADKVGITRSVIVNALRKFESAGVIESRSLGMKGTYIRVLNEKLLDELKKIK.

The segment at 1-156 (MSSLLSKTRR…SATIVGMEML (156 aa)) is GAF domain. Positions 204–223 (ASKIADKVGITRSVIVNALR) form a DNA-binding region, H-T-H motif.

Belongs to the CodY family.

Its subcellular location is the cytoplasm. Its function is as follows. DNA-binding global transcriptional regulator which is involved in the adaptive response to starvation and acts by directly or indirectly controlling the expression of numerous genes in response to nutrient availability. During rapid exponential growth, CodY is highly active and represses genes whose products allow adaptation to nutrient depletion. This is Global transcriptional regulator CodY from Clostridium botulinum (strain Eklund 17B / Type B).